The following is a 444-amino-acid chain: Gustatory receptor 5a for trehalose (444 aa).

The Cytoplasmic segment spans residues 1-56 (MRQLKGRNRCNRAVRHLKIQGKMWLKNLKSGLEQIRESQVRGTRKNFLHDGSFHEA). Residues 57 to 77 (VAPVLAVAQCFCLMPVCGISA) traverse the membrane as a helical segment. Residues 78-178 (PTYRGLSFNR…RARPARRLKL (101 aa)) lie on the Extracellular side of the membrane. Residues 179–199 (VAFVLLVVSLMEHLLSIISVV) form a helical membrane-spanning segment. Over 200–214 (YYDFCPRRSDPVESY) the chain is Cytoplasmic. Residues 215–235 (LLGASAQLFEVFPYSNWLAWL) traverse the membrane as a helical segment. Residues 236–240 (GKIQN) are Extracellular-facing. A helical membrane pass occupies residues 241 to 261 (VLLTFGWSYMDIFLMMLGMGL). The Cytoplasmic portion of the chain corresponds to 262-305 (SEMLARLNRSLEQQVRQPMPEAYWTWSRTLYRSIVELIREVDDA). Residues 306 to 326 (VSGIMLISFGSNLYFICLQLL) form a helical membrane-spanning segment. The Extracellular segment spans residues 327–338 (KSINTMPSSAHA). A helical membrane pass occupies residues 339–359 (VYFYFSLLFLLSRSTAVLLFV). The Cytoplasmic portion of the chain corresponds to 360–410 (SAINDQAREPLRLLRLVPLKGYHPEVFRFAAELASDQVALTGLKFFNVTRK). The helical transmembrane segment at 411 to 431 (LFLAMAGTVATYELVLIQFHE) threads the bilayer. The Extracellular segment spans residues 432 to 444 (DKKTWDCSPFNLD).

Belongs to the insect chemoreceptor superfamily. Gustatory receptor (GR) family. Gr5a subfamily. As to expression, expressed in labellar chemosensory neurons.

The protein resides in the cell membrane. Gustatory receptor required for response to the sugar trehalose in taste neurons. Gr5a neurons selectively respond to sugars, in contrast to Gr66a cells which respond to bitter compounds. Flies are attracted to sugars and avoid bitter substances, suggesting that Gr5a neuron activity is sufficient to mediate acceptance behavior. Sugar signal transduction occurs through coupling with G-proteins such as Galpha49B and G-salpha60A. The chain is Gustatory receptor 5a for trehalose (Gr5a) from Drosophila melanogaster (Fruit fly).